We begin with the raw amino-acid sequence, 908 residues long: Protein translocase subunit SecA (908 aa).

Residues Gln-87, 105-109 (GEGKT), and Asp-512 each bind ATP. The tract at residues 865–908 (GGDDGSDEMMAHTPMIRDGDKVGRNDPCPCGSGRKYKQCHGKLS) is disordered. Basic and acidic residues predominate over residues 879–888 (MIRDGDKVGR). Zn(2+) is bound by residues Cys-892, Cys-894, Cys-903, and His-904. The segment covering 898 to 908 (RKYKQCHGKLS) has biased composition (basic residues).

This sequence belongs to the SecA family. Monomer and homodimer. Part of the essential Sec protein translocation apparatus which comprises SecA, SecYEG and auxiliary proteins SecDF-YajC and YidC. It depends on Zn(2+) as a cofactor.

It is found in the cell inner membrane. Its subcellular location is the cytoplasm. It catalyses the reaction ATP + H2O + cellular proteinSide 1 = ADP + phosphate + cellular proteinSide 2.. Functionally, part of the Sec protein translocase complex. Interacts with the SecYEG preprotein conducting channel. Has a central role in coupling the hydrolysis of ATP to the transfer of proteins into and across the cell membrane, serving both as a receptor for the preprotein-SecB complex and as an ATP-driven molecular motor driving the stepwise translocation of polypeptide chains across the membrane. This chain is Protein translocase subunit SecA, found in Shewanella sp. (strain MR-4).